Consider the following 399-residue polypeptide: uncharacterized protein (399 aa).

A run of 5 helical transmembrane segments spans residues 26–46 (LLTI…ISLG), 266–286 (VITI…AVGI), 301–321 (IGIL…FVVE), 324–344 (FLGL…AEVI), and 358–378 (AWIS…VGVI).

It belongs to the ABC-4 integral membrane protein family.

It is found in the cell membrane. This is an uncharacterized protein from Methanocaldococcus jannaschii (strain ATCC 43067 / DSM 2661 / JAL-1 / JCM 10045 / NBRC 100440) (Methanococcus jannaschii).